The following is a 362-amino-acid chain: Peptide chain release factor 1 (362 aa).

Glutamine 237 carries the N5-methylglutamine modification.

The protein belongs to the prokaryotic/mitochondrial release factor family. In terms of processing, methylated by PrmC. Methylation increases the termination efficiency of RF1.

It localises to the cytoplasm. Its function is as follows. Peptide chain release factor 1 directs the termination of translation in response to the peptide chain termination codons UAG and UAA. The sequence is that of Peptide chain release factor 1 from Aliivibrio salmonicida (strain LFI1238) (Vibrio salmonicida (strain LFI1238)).